The following is a 106-amino-acid chain: Iron-sulfur cluster assembly protein CyaY (106 aa).

It belongs to the frataxin family.

Involved in iron-sulfur (Fe-S) cluster assembly. May act as a regulator of Fe-S biogenesis. The polypeptide is Iron-sulfur cluster assembly protein CyaY (Shigella flexneri serotype 5b (strain 8401)).